The chain runs to 529 residues: Acid-sensing ion channel 1C (529 aa).

Topologically, residues M1 to S51 are cytoplasmic. The chain crosses the membrane as a helical span at residues F52–Y68. At Y69–E427 the chain is on the extracellular side. 3 N-linked (GlcNAc...) asparagine glycosylation sites follow: N86, N155, and N161. Disulfide bonds link C95–C196, C174–C181, C292–C367, C310–C363, C314–C361, C323–C345, and C325–C337. N185 is a glycosylation site (N-linked (GlcNAc...) asparagine). N-linked (GlcNAc...) asparagine glycosylation is found at N368 and N395. The chain crosses the membrane as a discontinuously helical span at residues V428–Y458. A GAS motif; ion selectivity filter motif is present at residues G444–S446. Over E459–K529 the chain is Cytoplasmic.

The protein belongs to the amiloride-sensitive sodium channel (TC 1.A.6) family. ASIC1 subfamily. Homotrimer. Heterotrimer; with other ASIC proteins producing channel with different properties. Interacts with asic1a. Expressed in central nervous system.

Its subcellular location is the cell membrane. It localises to the postsynaptic cell membrane. The protein localises to the cell projection. It is found in the dendrite. The enzyme catalyses Na(+)(in) = Na(+)(out). It carries out the reaction K(+)(in) = K(+)(out). It catalyses the reaction Li(+)(in) = Li(+)(out). The catalysed reaction is Ca(2+)(in) = Ca(2+)(out). Its activity is regulated as follows. Inhibited by the diuretic drug amiloride. Functionally, forms voltage-independent, pH-gated trimeric sodium channels that act as postsynaptic excitatory receptors in the nervous system, playing a crucial role in regulating synaptic plasticity, learning, and memory. Upon extracellular pH drop this channel elicits transient, fast activating, and completely desensitizing inward currents. Displays high selectivity for sodium ions but can also permit the permeation of other cations. This chain is Acid-sensing ion channel 1C, found in Danio rerio (Zebrafish).